A 283-amino-acid polypeptide reads, in one-letter code: uncharacterized protein (283 aa).

Residues 3–79 form the HTH rpiR-type domain; it reads TGGLAIIQSM…MRVAGDLAKP (77 aa). Residues 39 to 58 constitute a DNA-binding region (H-T-H motif); it reads VNEISALANSSDAAVIRLCK. Positions 123–264 constitute an SIS domain; it reads AVSLLLKAHT…FLGMAAEQYE (142 aa).

This is an uncharacterized protein from Bacillus subtilis (strain 168).